Consider the following 215-residue polypeptide: Formate dehydrogenase subunit beta (215 aa).

The 4Fe-4S ferredoxin-type 1 domain occupies 3-32 (KGFFVDTTRCTACRGCQVACKQWHGNPATP). The [4Fe-4S] cluster site is built by Cys-12, Cys-15, Cys-18, Cys-22, Cys-73, Cys-76, Cys-81, Cys-121, Cys-138, Cys-141, Cys-153, and Cys-157. Positions 129 to 168 (VAESNQMAKCDMCIDRITNGLRPACVTSCPTGAMNFGDLS) constitute a 4Fe-4S ferredoxin-type 2 domain.

In terms of assembly, heterodimer of alpha (FdhA) and beta (FdhB) subunits. The cofactor is [4Fe-4S] cluster.

Its subcellular location is the periplasm. Its function is as follows. Beta chain of the formate dehydrogenase (FDH) catalyzes the reversible two-electron oxidation of formate to carbon dioxide. FDH loses activity in the presence of air, but this activity can be restored. This chain is an electron transfer unit. In Megalodesulfovibrio gigas (strain ATCC 19364 / DSM 1382 / NCIMB 9332 / VKM B-1759) (Desulfovibrio gigas), this protein is Formate dehydrogenase subunit beta.